The chain runs to 463 residues: Probable multidrug resistance protein YoeA (463 aa).

The next 12 membrane-spanning stretches (helical) occupy residues 24–44, 56–76, 106–126, 143–163, 177–197, 202–222, 256–276, 293–313, 330–350, 370–390, 397–417, and 427–447; these read LFLVPLLLSNVLQSVGQLVGM, VAAVSSFFPLFFLLISFTIGI, FTFLLGVVLAVIGSIFTLDIL, ARILFYAMPFMFLYFAYTTFL, IVSTVINIALLPVLILGMFGF, IYGSAYATVISTIATFLVLMV, VPASINMILVSLSEIAVISFV, VASYVQMPAVSLGIAVSIFAA, VGIWLNYIIGGVLIILIYVFS, LLMITLWSYLLFGNAQIISAT, VLWPTVISIFAIWGVEVPVAF, and ILGVWVGYPAAFAVSLLLIYG.

It belongs to the multi antimicrobial extrusion (MATE) (TC 2.A.66.1) family.

The protein localises to the cell membrane. This is Probable multidrug resistance protein YoeA (yoeA) from Bacillus subtilis (strain 168).